The chain runs to 361 residues: Glutamate 5-kinase (361 aa).

An ATP-binding site is contributed by Lys14. Substrate-binding residues include Ser54, Asp141, and Asn153. In terms of domain architecture, PUA spans 277–355 (KGAVIINQGA…KGLKPVIHYD (79 aa)).

This sequence belongs to the glutamate 5-kinase family.

The protein resides in the cytoplasm. It catalyses the reaction L-glutamate + ATP = L-glutamyl 5-phosphate + ADP. Its pathway is amino-acid biosynthesis; L-proline biosynthesis; L-glutamate 5-semialdehyde from L-glutamate: step 1/2. Functionally, catalyzes the transfer of a phosphate group to glutamate to form L-glutamate 5-phosphate. The sequence is that of Glutamate 5-kinase from Chlorobaculum tepidum (strain ATCC 49652 / DSM 12025 / NBRC 103806 / TLS) (Chlorobium tepidum).